We begin with the raw amino-acid sequence, 50 residues long: Metallothionein zym1 (50 aa).

C7, C15, C17, C21, C23, C26, C30, C32, C40, C42, C45, and C47 together coordinate Zn(2+).

It belongs to the metallothionein superfamily.

It localises to the cytoplasm. The protein localises to the nucleus. Metallothionein involved in tolerance to zinc and cadmium. Binds four zinc ions. The sequence is that of Metallothionein zym1 (zym1) from Schizosaccharomyces pombe (strain 972 / ATCC 24843) (Fission yeast).